The chain runs to 239 residues: Proteasome activator complex subunit 2 (239 aa).

The residue at position 2 (A2) is an N-acetylalanine. A Phosphoserine modification is found at S10.

Belongs to the PA28 family. As to quaternary structure, heterodimer of PSME1 and PSME2, which forms a hexameric ring.

Its function is as follows. Implicated in immunoproteasome assembly and required for efficient antigen processing. The PA28 activator complex enhances the generation of class I binding peptides by altering the cleavage pattern of the proteasome. This is Proteasome activator complex subunit 2 (PSME2) from Homo sapiens (Human).